Here is a 565-residue protein sequence, read N- to C-terminus: Liver carboxylesterase 1 (565 aa).

A signal peptide spans 1–18; the sequence is MWLCALSLISLTACLSLG. A disulfide bond links C87 and C116. S221 functions as the Acyl-ester intermediate in the catalytic mechanism. The cysteines at positions 273 and 284 are disulfide-linked. E353 (charge relay system) is an active-site residue. S378 carries the post-translational modification Phosphoserine. N388 carries N-linked (GlcNAc...) asparagine glycosylation. The Charge relay system role is filled by H466. A glycan (N-linked (GlcNAc...) asparagine) is linked at N489.

It belongs to the type-B carboxylesterase/lipase family. Homotrimer and homohexamer. Binds to beta-glucuronidase. As to expression, detected in kidney, liver and lung.

It is found in the endoplasmic reticulum lumen. The protein localises to the cytoplasm. Its subcellular location is the lipid droplet. It catalyses the reaction a carboxylic ester + H2O = an alcohol + a carboxylate + H(+). It carries out the reaction cholesteryl (9Z-octadecenoate) + H2O = cholesterol + (9Z)-octadecenoate + H(+). The catalysed reaction is 2-(5Z,8Z,11Z,14Z-eicosatetraenoyl)-glycerol + H2O = glycerol + (5Z,8Z,11Z,14Z)-eicosatetraenoate + H(+). The enzyme catalyses prostaglandin E2 1-glyceryl ester + H2O = prostaglandin E2 + glycerol + H(+). It catalyses the reaction a cholesterol ester + H2O = cholesterol + a fatty acid + H(+). It carries out the reaction prostaglandin F2alpha 1-glyceryl ester + H2O = prostaglandin F2alpha + glycerol + H(+). Functionally, involved in the detoxification of xenobiotics and in the activation of ester and amide prodrugs. Hydrolyzes aromatic and aliphatic esters, but has no catalytic activity toward amides or a fatty acyl-CoA ester. Displays fatty acid ethyl ester synthase activity, catalyzing the ethyl esterification of oleic acid to ethyloleate. Converts monoacylglycerides to free fatty acids and glycerol. Hydrolyzes of 2-arachidonoylglycerol and prostaglandins. Hydrolyzes cellular cholesteryl esters to free cholesterols and promotes reverse cholesterol transport (RCT) by facilitating both the initial and final steps in the process. First of all, allows free cholesterol efflux from macrophages to extracellular cholesterol acceptors and secondly, releases free cholesterol from lipoprotein-delivered cholesteryl esters in the liver for bile acid synthesis or direct secretion into the bile. This chain is Liver carboxylesterase 1, found in Mus musculus (Mouse).